The following is a 499-amino-acid chain: Probable inactive receptor-like protein kinase At3g56050 (499 aa).

The signal sequence occupies residues 1 to 31 (MSNNWKSVRLRLQNRTLVFLLVILSFGSCYS). N-linked (GlcNAc...) asparagine glycosylation occurs at N14. Residues 32–146 (LKSQGDGFLE…SKTSSNSTIP (115 aa)) lie on the Extracellular side of the membrane. The tract at residues 80–121 (RDRPVARATPPSSSVSTRPDAKRSSTLPPPQKSPPAQHVSAP) is disordered. N142 is a glycosylation site (N-linked (GlcNAc...) asparagine). A helical membrane pass occupies residues 147 to 167 (IVAGCIAGAVFILLLATGVFF). Residues 168 to 499 (FKSKAGKSVN…WAELEVLSTA (332 aa)) are Cytoplasmic-facing. The Protein kinase domain maps to 208–474 (EDFSNVIGSC…EVTGRLREIT (267 aa)).

Its subcellular location is the cell membrane. The sequence is that of Probable inactive receptor-like protein kinase At3g56050 from Arabidopsis thaliana (Mouse-ear cress).